The primary structure comprises 162 residues: Caveolin-2 (162 aa).

The Cytoplasmic portion of the chain corresponds to M1–K86. Phosphotyrosine; by SRC is present on Y19. S20 and S23 each carry phosphoserine. Y27 carries the phosphotyrosine; by SRC modification. Phosphoserine is present on S36. An intramembrane region (helical) is located at residues F87–L107. Residues S108 to D162 are Cytoplasmic-facing.

Belongs to the caveolin family. In terms of assembly, monomer or homodimer. Interacts with CAV1; the interaction forms a stable heterooligomeric complex that is required for targeting to lipid rafts and for caveolae formation. Tyrosine phosphorylated forms do not form heterooligomers with the Tyr-19-phosphorylated form existing as a monomer or dimer, and the Tyr-27-form as a monomer only. Interacts (tyrosine phosphorylated form) with the SH2 domain-containing proteins, RASA1, NCK1 and SRC. Interacts (tyrosine phosphorylated form) with INSR, the interaction (Tyr-27-phosphorylated form) is increased on insulin stimulation. Interacts (Tyr-19 phosphorylated form) with MAPK1 (phosphorylated form); the interaction, promoted by insulin, leads to nuclear location and MAPK1 activation. Interacts with STAT3; the interaction is increased on insulin-induced tyrosine phosphorylation leading to STAT activation. Phosphorylated on serine and tyrosine residues. CAV1 promotes phosphorylation on Ser-23 which then targets the complex to the plasma membrane, lipid rafts and caveolae. Phosphorylation on Ser-36 appears to modulate mitosis in endothelial cells. Phosphorylation on both Tyr-19 and Tyr-27 is required for insulin-induced 'Ser-727' phosphorylation of STAT3 and its activation. Phosphorylation on Tyr-19 is required for insulin-induced phosphorylation of MAPK1 and DNA binding of STAT3. Tyrosine phosphorylation is induced by both EGF and insulin (By. similarity).

The protein localises to the nucleus. It is found in the cytoplasm. It localises to the golgi apparatus membrane. Its subcellular location is the cell membrane. The protein resides in the membrane. The protein localises to the caveola. May act as a scaffolding protein within caveolar membranes. Interacts directly with G-protein alpha subunits and can functionally regulate their activity. Acts as an accessory protein in conjunction with CAV1 in targeting to lipid rafts and driving caveolae formation. The Ser-36 phosphorylated form has a role in modulating mitosis in endothelial cells. Positive regulator of cellular mitogenesis of the MAPK signaling pathway. Required for the insulin-stimulated nuclear translocation and activation of MAPK1 and STAT3, and the subsequent regulation of cell cycle progression. The protein is Caveolin-2 (CAV2) of Pan troglodytes (Chimpanzee).